A 318-amino-acid polypeptide reads, in one-letter code: Dehydration-responsive element-binding protein 2E (318 aa).

Positions 1 to 15 are enriched in basic residues; it reads MESYGRKRAWKKGPT. The disordered stretch occupies residues 1 to 24; the sequence is MESYGRKRAWKKGPTRGKGGPQNA. The segment at residues 27–84 is a DNA-binding region (AP2/ERF); the sequence is EYRGVRQRTWGKWVAEIREPNKRTRLWLGSFATAEEAALAYDEAARRLYGPDAFLNLP. The tract at residues 140-178 is disordered; sequence ELKNSSSSPTKPPPRTPTRANPPPPPLPTSSPCSTVTNS. Positions 149–168 are enriched in pro residues; sequence TKPPPRTPTRANPPPPPLPT.

Belongs to the AP2/ERF transcription factor family. ERF subfamily.

It localises to the nucleus. In terms of biological role, probable transcriptional activator that binds to the DNA sequence 5'-[AG]CCGAC-3' of the cis-acting dehydration-responsive element (DRE). This Oryza sativa subsp. japonica (Rice) protein is Dehydration-responsive element-binding protein 2E (DREB2E).